A 235-amino-acid chain; its full sequence is 2,3,4,5-tetrahydropyridine-2,6-dicarboxylate N-acetyltransferase (235 aa).

The protein belongs to the transferase hexapeptide repeat family. DapH subfamily.

The catalysed reaction is (S)-2,3,4,5-tetrahydrodipicolinate + acetyl-CoA + H2O = L-2-acetamido-6-oxoheptanedioate + CoA. The protein operates within amino-acid biosynthesis; L-lysine biosynthesis via DAP pathway; LL-2,6-diaminopimelate from (S)-tetrahydrodipicolinate (acetylase route): step 1/3. Catalyzes the transfer of an acetyl group from acetyl-CoA to tetrahydrodipicolinate. The polypeptide is 2,3,4,5-tetrahydropyridine-2,6-dicarboxylate N-acetyltransferase (Exiguobacterium sibiricum (strain DSM 17290 / CCUG 55495 / CIP 109462 / JCM 13490 / 255-15)).